The sequence spans 144 residues: Large ribosomal subunit protein uL15 (144 aa).

A disordered region spans residues glycine 24–glycine 52.

The protein belongs to the universal ribosomal protein uL15 family. In terms of assembly, part of the 50S ribosomal subunit.

Functionally, binds to the 23S rRNA. This Cellvibrio japonicus (strain Ueda107) (Pseudomonas fluorescens subsp. cellulosa) protein is Large ribosomal subunit protein uL15.